A 154-amino-acid polypeptide reads, in one-letter code: D-aminoacyl-tRNA deacylase (154 aa).

Positions 138 to 139 (GP) match the Gly-cisPro motif, important for rejection of L-amino acids motif.

It belongs to the DTD family. In terms of assembly, homodimer.

The protein localises to the cytoplasm. It catalyses the reaction glycyl-tRNA(Ala) + H2O = tRNA(Ala) + glycine + H(+). The enzyme catalyses a D-aminoacyl-tRNA + H2O = a tRNA + a D-alpha-amino acid + H(+). An aminoacyl-tRNA editing enzyme that deacylates mischarged D-aminoacyl-tRNAs. Also deacylates mischarged glycyl-tRNA(Ala), protecting cells against glycine mischarging by AlaRS. Acts via tRNA-based rather than protein-based catalysis; rejects L-amino acids rather than detecting D-amino acids in the active site. By recycling D-aminoacyl-tRNA to D-amino acids and free tRNA molecules, this enzyme counteracts the toxicity associated with the formation of D-aminoacyl-tRNA entities in vivo and helps enforce protein L-homochirality. The polypeptide is D-aminoacyl-tRNA deacylase (Halorhodospira halophila (strain DSM 244 / SL1) (Ectothiorhodospira halophila (strain DSM 244 / SL1))).